Consider the following 990-residue polypeptide: Activator of stress genes protein 1 (990 aa).

The disordered stretch occupies residues 1-88 (MPKREIEDTQ…NKPKSQENKR (88 aa)). The span at 9–23 (TQSPYSSTGLVSTGE) shows a compositional bias: polar residues. The span at 24–61 (SPKTSTSTPTSSTNNRAATTTTNNTSTTSTSLLKSNSN) shows a compositional bias: low complexity. The segment at residues 95-121 (CDTCRQKKVKCDGKQPCIHCTVYSYKC) is a DNA-binding region (zn(2)-C6 fungal-type). 3 stretches are compositionally biased toward low complexity: residues 160–179 (NNNSSNQQSLQSLQQQQQHV), 282–293 (SFDDSSNSAVSS), and 773–793 (TATTNSTTTTANTNSNSNSNS). 4 disordered regions span residues 160–192 (NNNSSNQQSLQSLQQQQQHVVHQHQHQPLPADE), 255–295 (QDPD…SSPR), 764–800 (RTASRSRQVTATTNSTTTTANTNSNSNSNSQPTTLPA), and 915–944 (SNNNNSNNVNNNFNNNNNAGEVNNNSNGVA).

This sequence belongs to the ASG1 family.

It is found in the nucleus. Its function is as follows. Transcription factor necessary to sustain growth on non-fermentative carbon sources such as sodium acetate, acetic acid, or ethanol. Plays a role in hyphal formation. The polypeptide is Activator of stress genes protein 1 (ASG1) (Candida albicans (strain SC5314 / ATCC MYA-2876) (Yeast)).